The sequence spans 326 residues: Phenylalanine--tRNA ligase alpha subunit (326 aa).

Glu251 is a Mg(2+) binding site.

The protein belongs to the class-II aminoacyl-tRNA synthetase family. Phe-tRNA synthetase alpha subunit type 1 subfamily. As to quaternary structure, tetramer of two alpha and two beta subunits. It depends on Mg(2+) as a cofactor.

The protein resides in the cytoplasm. The catalysed reaction is tRNA(Phe) + L-phenylalanine + ATP = L-phenylalanyl-tRNA(Phe) + AMP + diphosphate + H(+). This Idiomarina loihiensis (strain ATCC BAA-735 / DSM 15497 / L2-TR) protein is Phenylalanine--tRNA ligase alpha subunit.